The following is a 556-amino-acid chain: Urocanate hydratase (556 aa).

NAD(+) contacts are provided by residues 52–53, Gln-130, 176–178, Glu-196, Arg-201, 242–243, 263–267, 273–274, and Tyr-322; these read GG, GMG, NA, QTSAH, and YL. Cys-410 is a catalytic residue. Gly-492 provides a ligand contact to NAD(+).

This sequence belongs to the urocanase family. It depends on NAD(+) as a cofactor.

It localises to the cytoplasm. The catalysed reaction is 4-imidazolone-5-propanoate = trans-urocanate + H2O. It participates in amino-acid degradation; L-histidine degradation into L-glutamate; N-formimidoyl-L-glutamate from L-histidine: step 2/3. In terms of biological role, catalyzes the conversion of urocanate to 4-imidazolone-5-propionate. The protein is Urocanate hydratase of Shewanella woodyi (strain ATCC 51908 / MS32).